Consider the following 153-residue polypeptide: Agglutinin (153 aa).

Beta-D-galactosyl-(1-&gt;3)-N-acetyl-D-galactosamine contacts are provided by residues 22-25 (NAWE) and asparagine 46. The Ricin B-type lectin domain occupies 58 to 153 (GDSAEYLIIN…DNQKWYFDAK (96 aa)).

In terms of assembly, homodimer.

In terms of biological role, lectin that primarily recognizes glycans with a non-reducing terminal N-acetylgalactosamine (GalNAc), with a preference for the alpha- over the beta-anomer. Can also bind non-reducing terminal galactose (Gal) residues but with a lower affinity. Strongly interacts with glycolipid type glycans with terminal non-reducing Gal or GalNAc but fails to bind sialylated or fucosylated forms of the same glycans. Strongly interacts with galactosylated N-glycans, displaying highest affinity for alpha-1-3 branched mono-antennary N-glycans but also binding to multi-antennary glycans. The protein is Agglutinin of Sclerotinia sclerotiorum (strain ATCC 18683 / 1980 / Ss-1) (White mold).